The sequence spans 301 residues: Movement protein (301 aa).

2 disordered regions span residues 1-22 (MLTL…GPLV) and 282-301 (VEEE…FDEI). 2 essential for tubule formation and cell-to-cell movement regions span residues 19-159 (GPLV…NMPS) and 209-283 (GVSF…RSVE). The essential for long-distance movement stretch occupies residues 284-288 (EEEEG).

The protein belongs to the tospovirus movement protein family. Oligomerizes to form tubule structures through host plasmodesma. Interacts with host A.thaliana At4g26020 protein, which is involved in intra- and inter-cellular trafficking.

The protein resides in the host cell junction. It localises to the host plasmodesma. In terms of biological role, viral movemement protein which is responsible for cell-to cell spread of viral genome. Increases the size exclusion limit (SEL) of plasmodesmata by forming tubules structures, thereby allowing viral ribonucleocapsids to spread directly to neighboring cells. In Tomato spotted wilt virus (strain Brazilian Br-01) (TSWV), this protein is Movement protein (NSM).